The following is an 884-amino-acid chain: Protein translocase subunit SecA (884 aa).

ATP-binding positions include glutamine 82, 100–104 (GEGKT), and aspartate 491.

It belongs to the SecA family.

The protein resides in the plastid. It is found in the chloroplast stroma. Its subcellular location is the chloroplast thylakoid membrane. The enzyme catalyses ATP + H2O + cellular proteinSide 1 = ADP + phosphate + cellular proteinSide 2.. Its function is as follows. Has a central role in coupling the hydrolysis of ATP to the transfer of proteins across the thylakoid membrane. This Olisthodiscus luteus (Marine phytoflagellate) protein is Protein translocase subunit SecA.